The primary structure comprises 197 residues: Prefoldin subunit 3 (197 aa).

The interval 1 to 26 (MASLALRGSSENPAPTKDTTTNPRGI) is disordered. Residues 9–23 (SSENPAPTKDTTTNP) show a composition bias toward polar residues.

This sequence belongs to the prefoldin subunit alpha family. As to quaternary structure, heterohexamer of two PFD-alpha type and four PFD-beta type subunits.

Functionally, prefoldin subunit; part of the gene cluster that mediates the biosynthesis of elsinochromes, pigments consisting of at least four interconvertible tautomers (A, B, C and D) that have a core phenolic quinone to which various side chains are attached and which play an important role in fungal pathogenesis. The non-reducing polyketide synthase PKS1 was proposed to iteratively catalyze decarboxylation between acetyl-CoA and malonyl-CoA subunits for polyketide chain elongation. The released polyketide undergoes cyclization to form an aromatic ring, and proceeds via serial modification steps to produce the heptaketide back- bone of elsinochrome. As elsinochrome has a symmetrical structure, two identical heptaketides are fused to form a core 1,2-dihydrobenzo-perylene ring structure, which can then be successively modified to produce the various derivatives of elsinochrome. Some of these reactions may be cooperatively carried out, at least in part, by the products of RDT1, OXR1 and PKS1. PRF1, embedded within the elsinochrome cluster possibly functions to stabilize some of the biosynthetic enzymes required for elsinochrome production. As prefoldin is a hexamer containing 2 a and 4 b subunits, additional prefoldin subunits, whose coding genes may not immediately link to the elsinochrome biosynthetic gene cluster, are required to fulfill the chaperone function. In addition, no methyltransferase-coding gene exists within the biosynthetic gene cluster, even though elsinochrome has four methyl groups at positions C3, C7, C8 and C12. Apparently, the identified gene cluster does not contain the entire entourage of genes responsible for elsinochrome biosynthesis. Once elsinochrome is synthesized, it must be exported outside the fungal cells, which is probably accomplished by the ECT1 transporter, to avoid toxicity. This Elsinoe fawcettii (Citrus scab fungus) protein is Prefoldin subunit 3.